Consider the following 476-residue polypeptide: PTS system N-acetylmuramic acid-specific EIIBC component (476 aa).

Positions 1-89 (MATIDNAMIH…KASLGDNMSS (89 aa)) constitute a PTS EIIB type-1 domain. Cys-28 (phosphocysteine intermediate; for EIIB activity) is an active-site residue. In terms of domain architecture, PTS EIIC type-1 spans 116-476 (AKFATIFTPL…FFATKDVDLS (361 aa)). 10 helical membrane passes run 118–138 (FATIFTPLIPGFIGAGLLLGL), 160–180 (LIAYMKVFSKGLFSFLSILIG), 186–206 (AFGGSGVNGAILASLFILGYN), 220–240 (FFGLTIDPRGNIIGVLIAAIV), 265–285 (TLLIMGCFTFLFIMPIGVYLF), 304–324 (VLAGLFLISVMLGIHQGFVPV), 337–357 (LFPVLAMAGAGQVGAALALYF), 371–391 (GAIIPGFLGIGEPLIYGVTLP), 396–416 (FITACIGGAAGGFTIGLIAYL), and 443–463 (VLPAIATYLLGTVVAYATGFI).

It is found in the cell inner membrane. The catalysed reaction is N-acetyl-beta-D-muramate(out) + N(pros)-phospho-L-histidyl-[protein] = N-acetyl-beta-D-muramate 6-phosphate(in) + L-histidyl-[protein]. Functionally, the phosphoenolpyruvate-dependent sugar phosphotransferase system (sugar PTS), a major carbohydrate active transport system, catalyzes the phosphorylation of incoming sugar substrates concomitantly with their translocation across the cell membrane. This system is involved in N-acetylmuramic acid (MurNAc) transport, yielding cytoplasmic MurNAc-6-P. Is also able to take up anhydro-N-acetylmuramic acid (anhMurNAc), but cannot phosphorylate the carbon 6, probably because of the 1,6-anhydro ring. The polypeptide is PTS system N-acetylmuramic acid-specific EIIBC component (murP) (Pasteurella multocida (strain Pm70)).